Reading from the N-terminus, the 486-residue chain is ATP synthase subunit beta (486 aa).

G164–T171 contributes to the ATP binding site.

This sequence belongs to the ATPase alpha/beta chains family. F-type ATPases have 2 components, CF(1) - the catalytic core - and CF(0) - the membrane proton channel. CF(1) has five subunits: alpha(3), beta(3), gamma(1), delta(1), epsilon(1). CF(0) has four main subunits: a(1), b(1), b'(1) and c(9-12).

It is found in the cellular thylakoid membrane. It carries out the reaction ATP + H2O + 4 H(+)(in) = ADP + phosphate + 5 H(+)(out). Its function is as follows. Produces ATP from ADP in the presence of a proton gradient across the membrane. The catalytic sites are hosted primarily by the beta subunits. The sequence is that of ATP synthase subunit beta from Prochlorococcus marinus (strain MIT 9215).